A 331-amino-acid chain; its full sequence is Glutamyl-Q tRNA(Asp) synthetase (331 aa).

The span at 1-30 (MVQQAVIQRSANQQLSNQRSANQRATNQPT) shows a compositional bias: polar residues. Residues 1–36 (MVQQAVIQRSANQQLSNQRSANQRATNQPTEYVGRF) form a disordered region. L-glutamate contacts are provided by residues 35-39 (RFAPS) and Glu71. Positions 38-48 (PSPSGDLHFGS) match the 'HIGH' region motif. 4 residues coordinate Zn(2+): Cys127, Cys129, Tyr141, and Cys145. L-glutamate is bound by residues Tyr198 and Arg216. A 'KMSKS' region motif is present at residues 254–258 (KLSKQ). Residue Lys257 participates in ATP binding.

Belongs to the class-I aminoacyl-tRNA synthetase family. GluQ subfamily. Zn(2+) serves as cofactor.

Catalyzes the tRNA-independent activation of glutamate in presence of ATP and the subsequent transfer of glutamate onto a tRNA(Asp). Glutamate is transferred on the 2-amino-5-(4,5-dihydroxy-2-cyclopenten-1-yl) moiety of the queuosine in the wobble position of the QUC anticodon. This chain is Glutamyl-Q tRNA(Asp) synthetase, found in Yersinia pseudotuberculosis serotype I (strain IP32953).